Consider the following 387-residue polypeptide: 3-ketoacyl-CoA thiolase (387 aa).

The active-site Acyl-thioester intermediate is the Cys-91. Residues His-343 and Cys-373 each act as proton acceptor in the active site.

Belongs to the thiolase-like superfamily. Thiolase family. In terms of assembly, heterotetramer of two alpha chains (FadB) and two beta chains (FadA).

The protein localises to the cytoplasm. The enzyme catalyses an acyl-CoA + acetyl-CoA = a 3-oxoacyl-CoA + CoA. The protein operates within lipid metabolism; fatty acid beta-oxidation. Functionally, catalyzes the final step of fatty acid oxidation in which acetyl-CoA is released and the CoA ester of a fatty acid two carbons shorter is formed. The sequence is that of 3-ketoacyl-CoA thiolase from Pectobacterium carotovorum subsp. carotovorum (strain PC1).